The following is a 465-amino-acid chain: Cysteine--tRNA ligase (465 aa).

Residue C30 coordinates Zn(2+). A 'HIGH' region motif is present at residues 32–42; that stretch reads ITVYDYCHVGH. Residues C214, H239, and E243 each coordinate Zn(2+). The 'KMSKS' region signature appears at 271 to 275; sequence KMSKS. K274 contacts ATP.

This sequence belongs to the class-I aminoacyl-tRNA synthetase family. As to quaternary structure, monomer. It depends on Zn(2+) as a cofactor.

It localises to the cytoplasm. The enzyme catalyses tRNA(Cys) + L-cysteine + ATP = L-cysteinyl-tRNA(Cys) + AMP + diphosphate. The polypeptide is Cysteine--tRNA ligase (Burkholderia cenocepacia (strain HI2424)).